The chain runs to 342 residues: Deoxyguanosinetriphosphate triphosphohydrolase-like protein (342 aa).

An HD domain is found at 75–190 (RLVHTLEVSQ…VRFADKIAYV (116 aa)).

It belongs to the dGTPase family. Type 2 subfamily.

The protein is Deoxyguanosinetriphosphate triphosphohydrolase-like protein of Clostridium perfringens (strain 13 / Type A).